We begin with the raw amino-acid sequence, 475 residues long: ATP synthase subunit beta, chloroplastic (475 aa).

Residue 155-162 participates in ATP binding; it reads GGAGVGKT.

Belongs to the ATPase alpha/beta chains family. In terms of assembly, F-type ATPases have 2 components, CF(1) - the catalytic core - and CF(0) - the membrane proton channel. CF(1) has five subunits: alpha(3), beta(3), gamma(1), delta(1), epsilon(1). CF(0) has four main subunits: a(1), b(1), b'(1) and c(9-12).

The protein localises to the plastid. It is found in the chloroplast thylakoid membrane. The catalysed reaction is ATP + H2O + 4 H(+)(in) = ADP + phosphate + 5 H(+)(out). Produces ATP from ADP in the presence of a proton gradient across the membrane. The catalytic sites are hosted primarily by the beta subunits. The protein is ATP synthase subunit beta, chloroplastic of Guillardia theta (Cryptophyte).